We begin with the raw amino-acid sequence, 212 residues long: High frequency lysogenization protein HflD homolog (212 aa).

This sequence belongs to the HflD family.

The protein resides in the cytoplasm. Its subcellular location is the cell inner membrane. In Pectobacterium carotovorum subsp. carotovorum (strain PC1), this protein is High frequency lysogenization protein HflD homolog.